The primary structure comprises 186 residues: RNA-free ribonuclease P (186 aa).

The protein belongs to the HARP family.

The enzyme catalyses Endonucleolytic cleavage of RNA, removing 5'-extranucleotides from tRNA precursor.. Its function is as follows. RNA-free RNase P that catalyzes the removal of the 5'-leader sequence from pre-tRNA to produce the mature 5'-terminus. The chain is RNA-free ribonuclease P from Hydrogenobaculum sp. (strain Y04AAS1).